The sequence spans 690 residues: Proprotein convertase subtilisin/kexin type 9 (690 aa).

Residues 1 to 28 form the signal peptide; it reads MGTVSSRRSWWPLPLLLLLLLGPAGARA. Positions 29–150 are excised as a propeptide; sequence QEDEDGDYEE…IEEDSSVFAQ (122 aa). Tyr-36 is subject to Sulfotyrosine. Position 45 is a phosphoserine (Ser-45). The 73-residue stretch at 75–147 folds into the Inhibitor I9 domain; that stretch reads TYVVVLKEET…VDYIEEDSSV (73 aa). In terms of domain architecture, Peptidase S8 spans 153–459; it reads PWNLERITPP…GWQLFCRTVW (307 aa). Catalysis depends on charge relay system residues Asp-184 and His-224. 2 disulfide bridges follow: Cys-221–Cys-253 and Cys-321–Cys-356. Ser-384 serves as the catalytic Charge relay system. Positions 448-690 are C-terminal domain; that stretch reads GAGWQLFCRT…HLVQASQELQ (243 aa). Cystine bridges form between Cys-455/Cys-525, Cys-475/Cys-524, and Cys-484/Cys-507. A glycan (N-linked (GlcNAc...) asparagine) is linked at Asn-531. Intrachain disulfides connect Cys-532–Cys-599, Cys-550–Cys-598, Cys-560–Cys-586, Cys-606–Cys-677, Cys-624–Cys-676, and Cys-633–Cys-652. Ser-686 carries the phosphoserine modification.

Belongs to the peptidase S8 family. As to quaternary structure, monomer. Can self-associate to form dimers and higher multimers which may have increased LDLR degrading activity. The precursor protein but not the mature protein may form multimers. Interacts with APOB, VLDLR, LRP8/APOER2 and BACE1. The full-length immature form (pro-PCSK9) interacts with SCNN1A, SCNN1B and SCNN1G. The pro-PCSK9 form (via C-terminal domain) interacts with LDLR. Interacts (via the C-terminal domain) with ANXA2 (via repeat Annexin 1); the interaction inhibits the degradation of LDLR. Ca(2+) serves as cofactor. Cleavage by furin and PCSK5 generates a truncated inactive protein that is unable to induce LDLR degradation. In terms of processing, undergoes autocatalytic cleavage in the endoplasmic reticulum to release the propeptide from the N-terminus and the cleavage of the propeptide is strictly required for its maturation and activation. The cleaved propeptide however remains associated with the catalytic domain through non-covalent interactions, preventing potential substrates from accessing its active site. As a result, it is secreted from cells as a propeptide-containing, enzymatically inactive protein. Post-translationally, phosphorylation protects the propeptide against proteolysis.

The protein localises to the cytoplasm. It is found in the secreted. The protein resides in the endosome. Its subcellular location is the lysosome. It localises to the cell surface. The protein localises to the endoplasmic reticulum. It is found in the golgi apparatus. Its activity is regulated as follows. Its proteolytic activity is autoinhibited by the non-covalent binding of the propeptide to the catalytic domain. Inhibited by EGTA. Functionally, crucial player in the regulation of plasma cholesterol homeostasis. Binds to low-density lipid receptor family members: low density lipoprotein receptor (LDLR), very low density lipoprotein receptor (VLDLR), apolipoprotein E receptor (LRP1/APOER) and apolipoprotein receptor 2 (LRP8/APOER2), and promotes their degradation in intracellular acidic compartments. Acts via a non-proteolytic mechanism to enhance the degradation of the hepatic LDLR through a clathrin LDLRAP1/ARH-mediated pathway. May prevent the recycling of LDLR from endosomes to the cell surface or direct it to lysosomes for degradation. Can induce ubiquitination of LDLR leading to its subsequent degradation. Inhibits intracellular degradation of APOB via the autophagosome/lysosome pathway in a LDLR-independent manner. Involved in the disposal of non-acetylated intermediates of BACE1 in the early secretory pathway. Inhibits epithelial Na(+) channel (ENaC)-mediated Na(+) absorption by reducing ENaC surface expression primarily by increasing its proteasomal degradation. Regulates neuronal apoptosis via modulation of LRP8/APOER2 levels and related anti-apoptotic signaling pathways. The protein is Proprotein convertase subtilisin/kexin type 9 (PCSK9) of Gorilla gorilla gorilla (Western lowland gorilla).